We begin with the raw amino-acid sequence, 2102 residues long: Probable serine/threonine-protein kinase DDB_G0272282 (2102 aa).

In terms of domain architecture, PX spans 1–118 (MKYQLSILGD…NWLVPQNEPA (118 aa)). In terms of domain architecture, PH spans 124–222 (NPDKSGYLIK…WIKAIELSQQ (99 aa)). Positions 225 to 240 (QDQEQYRKQEEEERQK) are enriched in basic and acidic residues. Disordered stretches follow at residues 225 to 289 (QDQE…SDGS), 302 to 390 (GPNN…SDLN), 426 to 558 (EQPG…SASP), 574 to 665 (SNLP…PLPN), 685 to 768 (NNNS…NNSL), 804 to 842 (KKKE…GTLR), 1029 to 1051 (QQQQ…SSVN), 1106 to 1224 (GTPT…PQPQ), and 1476 to 1514 (SSKV…SSLT). 2 stretches are compositionally biased toward low complexity: residues 256 to 281 (STLT…LPSS) and 304 to 327 (NNSN…NNHN). A compositionally biased stretch (basic residues) spans 328–348 (HYNHHNNNHNNSHHHHHHHNG). Low complexity-rich tracts occupy residues 353 to 376 (SSQV…STSL) and 426 to 437 (EQPGSYQQPQHQ). The segment covering 438 to 450 (QGGGGGGGGGGGN) has biased composition (gly residues). Residues 466–484 (SNLSSRSNSNSSGSSSGSG) show a composition bias toward low complexity. Gly residues predominate over residues 485–501 (SSSGSGPIGSGGVGGGL). Low complexity-rich tracts occupy residues 535–558 (SNSS…SASP) and 587–626 (NANN…NNGN). Polar residues predominate over residues 627 to 659 (TASGSSCNTTPNLLPAPTNVSPIQNRARSSPMT). The segment covering 804–824 (KKKEKDKEKEKDKEKEKEKEI) has biased composition (basic and acidic residues). Residues 827 to 841 (NISTSTTPNKKNGTL) show a composition bias toward polar residues. Positions 1106–1118 (GTPTTTSGDNTPL) are enriched in polar residues. 3 stretches are compositionally biased toward low complexity: residues 1119 to 1182 (TNTA…NSSI), 1196 to 1221 (EQQQ…QQQP), and 1476 to 1492 (SSKV…SPIL). Residues 1493–1507 (SSPPPPMKQPPPQVI) are compositionally biased toward pro residues. The Protein kinase domain occupies 1527–1851 (FEIIKPISRG…AYEVKTHPFF (325 aa)). ATP contacts are provided by residues 1533–1541 (ISRGAFGRV) and Lys-1556. Catalysis depends on Asp-1650, which acts as the Proton acceptor. Low complexity-rich tracts occupy residues 1687–1729 (NTNT…SQTN), 1902–1999 (SQPQ…NINN), and 2006–2052 (NNNS…QINN). Disordered stretches follow at residues 1687 to 1741 (NTNT…KNTL) and 1902 to 2070 (SQPQ…SKIE). The region spanning 1852–1911 (ANVNWDTLIDQEMDNIFLPKPENNYDTDYFWDRQSMYDDEAEDDFLTINQSQPQHQSQHQ) is the AGC-kinase C-terminal domain.

The protein belongs to the protein kinase superfamily. AGC Ser/Thr protein kinase family.

The catalysed reaction is L-seryl-[protein] + ATP = O-phospho-L-seryl-[protein] + ADP + H(+). The enzyme catalyses L-threonyl-[protein] + ATP = O-phospho-L-threonyl-[protein] + ADP + H(+). The protein is Probable serine/threonine-protein kinase DDB_G0272282 of Dictyostelium discoideum (Social amoeba).